A 104-amino-acid polypeptide reads, in one-letter code: MPSQPFQDDGVVLETARPKVKPPKRYQVVLLNDDFTPMDFVVDVLTRFFGMDEAKANAVMLAVHTKGKGTCGVYSREVAEMKVMQVNQYAREHQHPLQCEMEVV.

Belongs to the ClpS family. In terms of assembly, binds to the N-terminal domain of the chaperone ClpA.

Functionally, involved in the modulation of the specificity of the ClpAP-mediated ATP-dependent protein degradation. In Hydrogenovibrio crunogenus (strain DSM 25203 / XCL-2) (Thiomicrospira crunogena), this protein is ATP-dependent Clp protease adapter protein ClpS.